Reading from the N-terminus, the 63-residue chain is MNYIDLKDKSEAELLAMLKEKKLELFTLNAKQKTMQLTNTSELRVAKKDIARIQTALTAARAK.

The protein belongs to the universal ribosomal protein uL29 family.

The protein is Large ribosomal subunit protein uL29 of Sulfurovum sp. (strain NBC37-1).